We begin with the raw amino-acid sequence, 105 residues long: Multidrug resistance protein EbrA (105 aa).

Transmembrane regions (helical) follow at residues 2-22, 35-55, 57-77, and 84-104; these read LVGY…AAML, ALVV…LNHI, LSLS…VIGV, and LNAK…LLNW.

This sequence belongs to the drug/metabolite transporter (DMT) superfamily. Small multidrug resistance (SMR) (TC 2.A.7.1) family. EbrA/EbrB subfamily. In terms of assembly, the efflux pump is composed of EbrA and EbrB.

The protein localises to the cell membrane. In terms of biological role, part of a multidrug efflux pump. Confers resistance to cationic lipophilic dyes such as ethidium bromide, acriflavine, pyronine Y and safranin O. The efflux is probably coupled to an influx of protons. This is Multidrug resistance protein EbrA (ebrA) from Bacillus atrophaeus.